Reading from the N-terminus, the 284-residue chain is Tropomyosin alpha-1 chain (284 aa).

An N-acetylmethionine modification is found at Met-1. Positions 1-40 (MDAIKKKMQMLKLDKENALDRAEQAESDKKASEDRSKQLE) are disordered. Positions 1-284 (MDAIKKKMQM…DHALNDMTSI (284 aa)) form a coiled coil. The segment covering 12 to 40 (KLDKENALDRAEQAESDKKASEDRSKQLE) has biased composition (basic and acidic residues).

As to quaternary structure, homodimer. Heterodimer of an alpha (TPM1, TPM3 or TPM4) and a beta (TPM2) chain.

It is found in the cytoplasm. Its subcellular location is the cytoskeleton. Functionally, binds to actin filaments in muscle and non-muscle cells. Plays a central role, in association with the troponin complex, in the calcium dependent regulation of vertebrate striated muscle contraction. Smooth muscle contraction is regulated by interaction with caldesmon. In non-muscle cells is implicated in stabilizing cytoskeleton actin filaments. The polypeptide is Tropomyosin alpha-1 chain (Chelon auratus (Golden grey mullet)).